The primary structure comprises 323 residues: tRNA dimethylallyltransferase (323 aa).

12–19 (GPTAAGKT) contacts ATP. Position 14-19 (14-19 (TAAGKT)) interacts with substrate. Interaction with substrate tRNA regions lie at residues 37 to 40 (DSAL) and 161 to 165 (QRLMR).

The protein belongs to the IPP transferase family. Monomer. It depends on Mg(2+) as a cofactor.

The catalysed reaction is adenosine(37) in tRNA + dimethylallyl diphosphate = N(6)-dimethylallyladenosine(37) in tRNA + diphosphate. Catalyzes the transfer of a dimethylallyl group onto the adenine at position 37 in tRNAs that read codons beginning with uridine, leading to the formation of N6-(dimethylallyl)adenosine (i(6)A). In Pseudomonas paraeruginosa (strain DSM 24068 / PA7) (Pseudomonas aeruginosa (strain PA7)), this protein is tRNA dimethylallyltransferase.